The primary structure comprises 328 residues: Mitotic checkpoint protein BUB3 (328 aa).

WD repeat units follow at residues 4 to 44 (SNEF…LYDV), 47 to 84 (NSMRLKYQHTGAVLDCAFYDPTHAWSGGLDHQLKMHDL), 87 to 125 (DQENLVGTHDAPIRCVEYCPEVNVMVTGSWDQTVKLWDP), 129 to 164 (CNAGTFSQPEKVYTLSVSGDRLIVGTAGRRVLVWDL), and 170 to 210 (VQQR…YLDP). Residue K179 is modified to N6-acetyllysine. The residue at position 211 (S211) is a Phosphoserine. K216 is covalently cross-linked (Glycyl lysine isopeptide (Lys-Gly) (interchain with G-Cter in ubiquitin)). WD repeat units follow at residues 217-263 (KKYA…IWDP) and 267-316 (KRLC…IRQV).

It belongs to the WD repeat BUB3 family. In terms of assembly, interacts with BUB1 and BUBR1. The BUB1/BUB3 complex interacts with MAD1L1. Interacts with ZNF207/BuGZ; leading to promote stability and kinetochore loading of BUB3. In terms of processing, poly-ADP-ribosylated by PARP1. Post-translationally, ubiquitinated by UBR5, promoting disassembly of the mitotic checkpoint complex from the APC/C complex.

Its subcellular location is the nucleus. It localises to the chromosome. The protein resides in the centromere. It is found in the kinetochore. Functionally, has a dual function in spindle-assembly checkpoint signaling and in promoting the establishment of correct kinetochore-microtubule (K-MT) attachments. Promotes the formation of stable end-on bipolar attachments. Necessary for kinetochore localization of BUB1. Regulates chromosome segregation during oocyte meiosis. The BUB1/BUB3 complex plays a role in the inhibition of anaphase-promoting complex or cyclosome (APC/C) when spindle-assembly checkpoint is activated and inhibits the ubiquitin ligase activity of APC/C by phosphorylating its activator CDC20. This complex can also phosphorylate MAD1L1. The protein is Mitotic checkpoint protein BUB3 (BUB3) of Homo sapiens (Human).